A 487-amino-acid chain; its full sequence is Glucose starvation modulator protein 1 (487 aa).

A disordered region spans residues 1-75 (MSIRFPEIPG…KRLTPQEKKA (75 aa)). The span at 59 to 68 (SFSSSMTKRL) shows a compositional bias: polar residues. Residues 83 to 111 (CVFCHSKHLQCSHSRPCQNCIKRNLAHEC) constitute a DNA-binding region (zn(2)-C6 fungal-type). Positions 122-139 (MSTTEVPAVSGESSSESG) are enriched in polar residues. The tract at residues 122-158 (MSTTEVPAVSGESSSESGRATGENGSEMGNPPDPQIA) is disordered. Residues 348 to 420 (CLLDYENLSR…FRLFESVAVG (73 aa)) enclose the PAS domain.

This sequence belongs to the ERT1/acuK family.

The protein localises to the nucleus. In terms of biological role, transcription factor which regulates nonfermentable carbon utilization. The chain is Glucose starvation modulator protein 1 (GSM1) from Clavispora lusitaniae (strain ATCC 42720) (Yeast).